The following is a 318-amino-acid chain: sn-1 stearoyl-lipid 9-desaturase (318 aa).

Transmembrane regions (helical) follow at residues 56 to 76 (VIFF…PQFF) and 80 to 100 (AVGM…TLGF). The short motif at 101-106 (HRCISH) is the Histidine box-1 element. The helical transmembrane segment at 117-137 (YIFVICGTLACQGGVFEWVGL) threads the bilayer. A Histidine box-2 motif is present at residues 138–142 (HRMHH). A helical membrane pass occupies residues 201–221 (VALGLILFALGGWPFVIWGIF). The Histidine box-3 motif lies at 271–275 (HHAYQ).

Belongs to the fatty acid desaturase type 2 family. Requires Fe(2+) as cofactor.

Its subcellular location is the cellular thylakoid membrane. It catalyses the reaction a 1-octadecanoyl 2-acyl-glycerolipid + 2 reduced [2Fe-2S]-[ferredoxin] + O2 + 2 H(+) = a 1-[(9Z)-octadecenoyl]-2-acyl-glycerolipid + 2 oxidized [2Fe-2S]-[ferredoxin] + 2 H2O. It functions in the pathway lipid metabolism; polyunsaturated fatty acid biosynthesis. Its function is as follows. Desaturase involved in fatty acid biosynthesis. Introduces a double bond at carbon 9 of stearoyl groups (18:0) attached to the sn-1 position of the glycerol moiety of membrane glycerolipids. Does not desaturate palmitic acid (16:0), palmitoleic acid (16:1) and cis-vaccenic acid (18:1). The chain is sn-1 stearoyl-lipid 9-desaturase from Synechocystis sp. (strain ATCC 27184 / PCC 6803 / Kazusa).